The sequence spans 424 residues: Imidazolonepropionase (424 aa).

Residues His-81 and His-83 each contribute to the Fe(3+) site. 2 residues coordinate Zn(2+): His-81 and His-83. Residues Arg-90, Tyr-153, and His-186 each contribute to the 4-imidazolone-5-propanoate site. Tyr-153 is a binding site for N-formimidoyl-L-glutamate. Fe(3+) is bound at residue His-251. His-251 lines the Zn(2+) pocket. Position 254 (Glu-254) interacts with 4-imidazolone-5-propanoate. Position 325 (Asp-325) interacts with Fe(3+). Asp-325 is a binding site for Zn(2+). Asn-327 and Gly-329 together coordinate N-formimidoyl-L-glutamate. A 4-imidazolone-5-propanoate-binding site is contributed by Thr-330.

The protein belongs to the metallo-dependent hydrolases superfamily. HutI family. Requires Zn(2+) as cofactor. It depends on Fe(3+) as a cofactor.

Its subcellular location is the cytoplasm. It catalyses the reaction 4-imidazolone-5-propanoate + H2O = N-formimidoyl-L-glutamate. It participates in amino-acid degradation; L-histidine degradation into L-glutamate; N-formimidoyl-L-glutamate from L-histidine: step 3/3. Catalyzes the hydrolytic cleavage of the carbon-nitrogen bond in imidazolone-5-propanoate to yield N-formimidoyl-L-glutamate. It is the third step in the universal histidine degradation pathway. The protein is Imidazolonepropionase of Syntrophobacter fumaroxidans (strain DSM 10017 / MPOB).